A 150-amino-acid chain; its full sequence is Catabolic 3-dehydroquinase 2 (150 aa).

Y23 (proton acceptor) is an active-site residue. 3 residues coordinate substrate: N74, H80, and D87. H100 serves as the catalytic Proton donor. Residues 101-102 and R111 contribute to the substrate site; that span reads IT.

This sequence belongs to the type-II 3-dehydroquinase family. As to quaternary structure, homododecamer. Adopts a ring-like structure, composed of an arrangement of two hexameric rings stacked on top of one another.

It carries out the reaction 3-dehydroquinate = 3-dehydroshikimate + H2O. It participates in aromatic compound metabolism; 3,4-dihydroxybenzoate biosynthesis; 3,4-dihydroxybenzoate from 3-dehydroquinate: step 1/2. Its function is as follows. Is involved in the catabolism of quinate. Allows the utilization of quinate as carbon source via the beta-ketoadipate pathway. The protein is Catabolic 3-dehydroquinase 2 of Aspergillus flavus (strain ATCC 200026 / FGSC A1120 / IAM 13836 / NRRL 3357 / JCM 12722 / SRRC 167).